A 358-amino-acid chain; its full sequence is MRKINFSAGPSTLPLEILEQAQKELCDYQGRGYSIMEISHRTKVFEEVHFGAQEKAKKLYELNDDYEVLFLQGGASLQFAMIPMNLALNGVCEYANTGVWTKKAIKEAQILGVNVKTVASSEESNFDHIPRVEFSDNADYAYICSNNTIYGTQYQNYPKTKTPLIVDASSDFFSRKVDFSNIALFYGGVQKNAGISGLSCIFIRKDMLERSKNKQIPSMLNYLTHAENQSLFNTPPTFAIYMFNLEMDWLLNQGGLDKVHEKNSQKATMLYECIDLSNGFYKGHADKKDRSLMNVSFNIAKNKDLEPLFVKEAEEAGMIGLKGHRILGGIRASIYNALNLDQVKTLCEFMKEFQGKYA.

R41 provides a ligand contact to L-glutamate. Pyridoxal 5'-phosphate-binding positions include A75–S76, W100, T148, D167, and Q190. K191 carries the post-translational modification N6-(pyridoxal phosphate)lysine. N233–T234 is a binding site for pyridoxal 5'-phosphate.

Belongs to the class-V pyridoxal-phosphate-dependent aminotransferase family. SerC subfamily. In terms of assembly, homodimer. The cofactor is pyridoxal 5'-phosphate.

The protein localises to the cytoplasm. The enzyme catalyses O-phospho-L-serine + 2-oxoglutarate = 3-phosphooxypyruvate + L-glutamate. The catalysed reaction is 4-(phosphooxy)-L-threonine + 2-oxoglutarate = (R)-3-hydroxy-2-oxo-4-phosphooxybutanoate + L-glutamate. Its pathway is amino-acid biosynthesis; L-serine biosynthesis; L-serine from 3-phospho-D-glycerate: step 2/3. It participates in cofactor biosynthesis; pyridoxine 5'-phosphate biosynthesis; pyridoxine 5'-phosphate from D-erythrose 4-phosphate: step 3/5. In terms of biological role, catalyzes the reversible conversion of 3-phosphohydroxypyruvate to phosphoserine and of 3-hydroxy-2-oxo-4-phosphonooxybutanoate to phosphohydroxythreonine. This chain is Phosphoserine aminotransferase, found in Campylobacter jejuni subsp. jejuni serotype O:2 (strain ATCC 700819 / NCTC 11168).